Here is a 472-residue protein sequence, read N- to C-terminus: 3-isopropylmalate dehydratase large subunit (472 aa).

3 residues coordinate [4Fe-4S] cluster: Cys-347, Cys-407, and Cys-410.

It belongs to the aconitase/IPM isomerase family. LeuC type 1 subfamily. As to quaternary structure, heterodimer of LeuC and LeuD. [4Fe-4S] cluster is required as a cofactor.

It carries out the reaction (2R,3S)-3-isopropylmalate = (2S)-2-isopropylmalate. The protein operates within amino-acid biosynthesis; L-leucine biosynthesis; L-leucine from 3-methyl-2-oxobutanoate: step 2/4. Catalyzes the isomerization between 2-isopropylmalate and 3-isopropylmalate, via the formation of 2-isopropylmaleate. The protein is 3-isopropylmalate dehydratase large subunit of Synechococcus sp. (strain WH7803).